A 257-amino-acid chain; its full sequence is Sulfur carrier protein FdhD (257 aa).

Cys-105 functions as the Cysteine persulfide intermediate in the catalytic mechanism.

Belongs to the FdhD family.

It localises to the cytoplasm. Required for formate dehydrogenase (FDH) activity. Acts as a sulfur carrier protein that transfers sulfur from IscS to the molybdenum cofactor prior to its insertion into FDH. In Saccharolobus solfataricus (strain ATCC 35092 / DSM 1617 / JCM 11322 / P2) (Sulfolobus solfataricus), this protein is Sulfur carrier protein FdhD.